Reading from the N-terminus, the 203-residue chain is Superoxide dismutase [Mn/Fe] (203 aa).

Positions 27, 81, 163, and 167 each coordinate Fe(3+). Mn(2+) is bound by residues His27, His81, Asp163, and His167.

The protein belongs to the iron/manganese superoxide dismutase family. Mn(2+) serves as cofactor. Fe(3+) is required as a cofactor.

It catalyses the reaction 2 superoxide + 2 H(+) = H2O2 + O2. In terms of biological role, destroys superoxide anion radicals which are normally produced within the cells and which are toxic to biological systems. Catalyzes the dismutation of superoxide anion radicals into O2 and H2O2 by successive reduction and oxidation of the transition metal ion at the active site. This Streptococcus mutans serotype c (strain ATCC 700610 / UA159) protein is Superoxide dismutase [Mn/Fe] (sodA).